A 139-amino-acid chain; its full sequence is uncharacterized protein (139 aa).

Residues 1-26 form a disordered region; that stretch reads MQLVREKRGAHQHVPRKTTEPQKVRG. The segment covering 17-26 has biased composition (basic and acidic residues); the sequence is KTTEPQKVRG.

This is an uncharacterized protein from Ictalurid herpesvirus 1 (strain Auburn) (IcHV-1).